Consider the following 349-residue polypeptide: Transmembrane protein 59-like (349 aa).

Residues 1-22 (MDSVALMPLLLLLLLQPPPATP) form the signal peptide. The N-linked (GlcNAc...) asparagine glycan is linked to asparagine 100. A helical membrane pass occupies residues 276–296 (ILACCLFLSVLVMLWLSCSTL). The Microbody targeting signal signature appears at 347-349 (TKL).

This sequence belongs to the TMEM59 family.

It localises to the golgi apparatus membrane. Functionally, modulates the O-glycosylation and complex N-glycosylation steps occurring during the Golgi maturation of APP. Inhibits APP transport to the cell surface and further shedding. This is Transmembrane protein 59-like (TMEM59L) from Bos taurus (Bovine).